Here is a 345-residue protein sequence, read N- to C-terminus: Holliday junction branch migration complex subunit RuvB (345 aa).

Residues 4–194 (TDKLFGAAPE…FGIVARLEFY (191 aa)) are large ATPase domain (RuvB-L). ATP contacts are provided by residues leucine 33, arginine 34, glycine 75, lysine 78, threonine 79, threonine 80, 141–143 (EDY), arginine 184, tyrosine 194, and arginine 231. A Mg(2+)-binding site is contributed by threonine 79. The small ATPAse domain (RuvB-S) stretch occupies residues 195-265 (NAEELTRIVS…VADAALAMLD (71 aa)). The tract at residues 268-345 (PAGLDVMDRK…LHFGLPVKDA (78 aa)) is head domain (RuvB-H). 2 residues coordinate DNA: arginine 323 and arginine 328.

Belongs to the RuvB family. Homohexamer. Forms an RuvA(8)-RuvB(12)-Holliday junction (HJ) complex. HJ DNA is sandwiched between 2 RuvA tetramers; dsDNA enters through RuvA and exits via RuvB. An RuvB hexamer assembles on each DNA strand where it exits the tetramer. Each RuvB hexamer is contacted by two RuvA subunits (via domain III) on 2 adjacent RuvB subunits; this complex drives branch migration. In the full resolvosome a probable DNA-RuvA(4)-RuvB(12)-RuvC(2) complex forms which resolves the HJ.

It is found in the cytoplasm. It catalyses the reaction ATP + H2O = ADP + phosphate + H(+). In terms of biological role, the RuvA-RuvB-RuvC complex processes Holliday junction (HJ) DNA during genetic recombination and DNA repair, while the RuvA-RuvB complex plays an important role in the rescue of blocked DNA replication forks via replication fork reversal (RFR). RuvA specifically binds to HJ cruciform DNA, conferring on it an open structure. The RuvB hexamer acts as an ATP-dependent pump, pulling dsDNA into and through the RuvAB complex. RuvB forms 2 homohexamers on either side of HJ DNA bound by 1 or 2 RuvA tetramers; 4 subunits per hexamer contact DNA at a time. Coordinated motions by a converter formed by DNA-disengaged RuvB subunits stimulates ATP hydrolysis and nucleotide exchange. Immobilization of the converter enables RuvB to convert the ATP-contained energy into a lever motion, pulling 2 nucleotides of DNA out of the RuvA tetramer per ATP hydrolyzed, thus driving DNA branch migration. The RuvB motors rotate together with the DNA substrate, which together with the progressing nucleotide cycle form the mechanistic basis for DNA recombination by continuous HJ branch migration. Branch migration allows RuvC to scan DNA until it finds its consensus sequence, where it cleaves and resolves cruciform DNA. The protein is Holliday junction branch migration complex subunit RuvB of Chromobacterium violaceum (strain ATCC 12472 / DSM 30191 / JCM 1249 / CCUG 213 / NBRC 12614 / NCIMB 9131 / NCTC 9757 / MK).